The primary structure comprises 205 residues: Ephrin-A1 (205 aa).

A signal peptide spans 1–17; that stretch reads MEFLWAPLLGLCCSLAA. Residues 18-151 enclose the Ephrin RBD domain; it reads ADRHIVFWNS…KLKVTVNGKI (134 aa). N26 carries N-linked (GlcNAc...) asparagine glycosylation. 2 disulfides stabilise this stretch: C51–C92 and C80–C140. S182 carries GPI-anchor amidated serine lipidation. The propeptide at 183–205 is removed in mature form; the sequence is AAPRLFPLVWAVLLLPLLLLQTQ.

Belongs to the ephrin family. As to quaternary structure, monomer. Homodimer. Forms heterodimers with EPHA2. Binds to the receptor tyrosine kinases EPHA2, EPHA3, EPHA4, EPHA5, EPHA6 and EPHA7. Also binds with low affinity to EPHA1. Undergoes proteolysis by a metalloprotease to give rise to a soluble monomeric form. In terms of processing, N-Glycosylation is required for binding to EPHA2 receptor and inducing its internalization.

It is found in the cell membrane. The protein localises to the secreted. Cell surface GPI-bound ligand for Eph receptors, a family of receptor tyrosine kinases which are crucial for migration, repulsion and adhesion during neuronal, vascular and epithelial development. Binds promiscuously Eph receptors residing on adjacent cells, leading to contact-dependent bidirectional signaling into neighboring cells. Plays an important role in angiogenesis and tumor neovascularization. The recruitment of VAV2, VAV3 and PI3-kinase p85 subunit by phosphorylated EPHA2 is critical for EFNA1-induced RAC1 GTPase activation and vascular endothelial cell migration and assembly. Exerts anti-oncogenic effects in tumor cells through activation and down-regulation of EPHA2. Activates EPHA2 by inducing tyrosine phosphorylation which leads to its internalization and degradation. Acts as a negative regulator in the tumorigenesis of gliomas by down-regulating EPHA2 and FAK. Can evoke collapse of embryonic neuronal growth cone and regulates dendritic spine morphogenesis. This Rattus norvegicus (Rat) protein is Ephrin-A1 (Efna1).